The primary structure comprises 99 residues: Small integral membrane protein 14 (99 aa).

At 1 to 49 the chain is on the lumenal side; the sequence is MAEGGFDPCECVCSHEHAMRRLINLLRQSQSYCTDTECLQELPGPSSDN. A helical membrane pass occupies residues 50 to 70; it reads GISITMILMAWMVIAVILFLL. The Cytoplasmic portion of the chain corresponds to 71–99; the sequence is RPPNLRGSNLTGKPASPHNGQDPPAPPVD. Residues 78–99 are disordered; it reads SNLTGKPASPHNGQDPPAPPVD.

The protein resides in the endoplasmic reticulum membrane. This Bos taurus (Bovine) protein is Small integral membrane protein 14 (SMIM14).